The primary structure comprises 525 residues: Tigger transposable element-derived protein 2 (525 aa).

Positions 1-52 (MLGKRKRVVLTIKDKLDIIKKLEEGNSFKKLSVLYGIGESTVRDIKKNKERI) constitute an HTH psq-type domain. 2 DNA-binding regions (H-T-H motif) span residues 28-48 (FKKL…IKKN) and 100-132 (TICA…FKQR). The 73-residue stretch at 67–139 (KRKSMKSSTY…KQRHGIPKAA (73 aa)) folds into the HTH CENPB-type domain. Residues 168 to 385 (LLPEQIYGAD…IRSNTITRAW (218 aa)) enclose the DDE-1 domain.

Belongs to the tigger transposable element derived protein family.

It localises to the nucleus. The chain is Tigger transposable element-derived protein 2 (Tigd2) from Mus musculus (Mouse).